Consider the following 143-residue polypeptide: Nucleoside diphosphate kinase (143 aa).

ATP-binding residues include K11, F59, R87, T93, R104, and N114. The active-site Pros-phosphohistidine intermediate is H117.

It belongs to the NDK family. Homotetramer. Requires Mg(2+) as cofactor.

It localises to the cytoplasm. It catalyses the reaction a 2'-deoxyribonucleoside 5'-diphosphate + ATP = a 2'-deoxyribonucleoside 5'-triphosphate + ADP. The catalysed reaction is a ribonucleoside 5'-diphosphate + ATP = a ribonucleoside 5'-triphosphate + ADP. Its function is as follows. Major role in the synthesis of nucleoside triphosphates other than ATP. The ATP gamma phosphate is transferred to the NDP beta phosphate via a ping-pong mechanism, using a phosphorylated active-site intermediate. The sequence is that of Nucleoside diphosphate kinase from Shewanella piezotolerans (strain WP3 / JCM 13877).